A 408-amino-acid chain; its full sequence is NADH-quinone oxidoreductase subunit D (408 aa).

It belongs to the complex I 49 kDa subunit family. As to quaternary structure, NDH-1 is composed of 14 different subunits. Subunits NuoB, C, D, E, F, and G constitute the peripheral sector of the complex.

It localises to the cell inner membrane. The catalysed reaction is a quinone + NADH + 5 H(+)(in) = a quinol + NAD(+) + 4 H(+)(out). In terms of biological role, NDH-1 shuttles electrons from NADH, via FMN and iron-sulfur (Fe-S) centers, to quinones in the respiratory chain. The immediate electron acceptor for the enzyme in this species is believed to be ubiquinone. Couples the redox reaction to proton translocation (for every two electrons transferred, four hydrogen ions are translocated across the cytoplasmic membrane), and thus conserves the redox energy in a proton gradient. The chain is NADH-quinone oxidoreductase subunit D from Campylobacter jejuni subsp. doylei (strain ATCC BAA-1458 / RM4099 / 269.97).